The sequence spans 556 residues: Beta-caryophyllene synthase TPS9FN (556 aa).

Positions 273, 310, 314, 451, and 454 each coordinate (2E,6E)-farnesyl diphosphate. 2 residues coordinate Mg(2+): aspartate 310 and aspartate 314. A DDXXD motif motif is present at residues 310-314 (DDIYD). Residues aspartate 454, serine 458, and glutamate 462 each contribute to the Mg(2+) site.

This sequence belongs to the terpene synthase family. Tpsb subfamily. Mg(2+) serves as cofactor. It depends on Mn(2+) as a cofactor. Expressed in glandular trichomes two to four weeks after flowering onset.

The enzyme catalyses (2E,6E)-farnesyl diphosphate = (-)-(E)-beta-caryophyllene + diphosphate. The catalysed reaction is (2E,6E)-farnesyl diphosphate = alpha-humulene + diphosphate. Its pathway is secondary metabolite biosynthesis; terpenoid biosynthesis. Its function is as follows. Involved in sesquiterpene olefins biosynthesis, constituants of cannabinoids and terpenoids-rich resins. Catalyzes mainly the conversion of (2E)-farnesyl diphosphate to beta-caryophyllene and alpha-humulene. Can also use (2E)-geranyl diphosphate as substrate with low efficiency. In Cannabis sativa (Hemp), this protein is Beta-caryophyllene synthase TPS9FN.